The following is a 516-amino-acid chain: MNNQVIIFDTTLRDGEQALSASLTVKEKLQIAYALERLGVDIIEAGFPVSSPGDFESVQTIAKNIKNSRVCALSRAVAKDIDAAAEALKVAEAFRIHTFISTSTIHVQDKLRRSYDDVVAMAVKAVKHARQYTDDVEFSCEDAGRTPIDNLCRMVEAAINAGARTINIPDTVGYTVPSEFGGIIQTLFNRVPNIDKAIISVHCHDDLGMSVANSIAAIQAGARQVEGTINGIGERAGNCALEEIAMIIKTRQELLGVTTGIKHDEISRTSKLVSQLCNMPIQSNKAIVGANAFSHSSGIHQDGMLKNKNTYEIMTPESIGLKNQALNLTSRSGRAAVKSHMDSMGYNENEYNLDALYEDFLKLADRKGQVFDYDLEALMHFSNLREEDDFYKLNYLSVQSGSVMATTSIKLLCGGEEKCEAAVGNGPVDALYQCIYRITGYEIVLDKFDLTAKGEGEDGLGQADIIANYKGRKYHGTGVSTDIVEASGQALLHVINSIHRADQIAQIKQKKSVATV.

The 263-residue stretch at 5–267 (VIIFDTTLRD…TTGIKHDEIS (263 aa)) folds into the Pyruvate carboxyltransferase domain. Mn(2+) contacts are provided by aspartate 14, histidine 202, histidine 204, and asparagine 238. The interval 392 to 516 (KLNYLSVQSG…IKQKKSVATV (125 aa)) is regulatory domain.

This sequence belongs to the alpha-IPM synthase/homocitrate synthase family. LeuA type 1 subfamily. In terms of assembly, homodimer. Requires Mn(2+) as cofactor.

It is found in the cytoplasm. It catalyses the reaction 3-methyl-2-oxobutanoate + acetyl-CoA + H2O = (2S)-2-isopropylmalate + CoA + H(+). Its pathway is amino-acid biosynthesis; L-leucine biosynthesis; L-leucine from 3-methyl-2-oxobutanoate: step 1/4. In terms of biological role, catalyzes the condensation of the acetyl group of acetyl-CoA with 3-methyl-2-oxobutanoate (2-ketoisovalerate) to form 3-carboxy-3-hydroxy-4-methylpentanoate (2-isopropylmalate). In Vibrio cholerae serotype O1 (strain ATCC 39315 / El Tor Inaba N16961), this protein is 2-isopropylmalate synthase.